The chain runs to 481 residues: Surface lipoprotein assembly modifier 2 (481 aa).

The N-terminal stretch at Met1–Ala24 is a signal peptide. Positions Ala24–Asn192 are N-terminal domain. A C-terminal probable beta barrel region spans residues Gln193 to Phe481. The next 14 membrane-spanning stretches (beta stranded) occupy residues Trp194–Asn204, Ala223–Pro243, Phe248–Asn257, Thr271–Gln281, Val285–Lys295, Leu315–Leu325, Trp329–Glu339, Tyr353–Pro363, Phe368–Arg377, Lys390–Asp399, Ile404–Asn414, Tyr432–Arg441, Leu448–Lys458, and Asn471–Phe481.

The protein belongs to the Slam family.

Its subcellular location is the cell outer membrane. Functionally, required for correct export to the cell surface of some cell outer membrane lipoproteins. This chain is Surface lipoprotein assembly modifier 2, found in Haemophilus influenzae (strain ATCC 51907 / DSM 11121 / KW20 / Rd).